The chain runs to 752 residues: Iron-sulfur clusters transporter ABCB7, mitochondrial (752 aa).

The N-terminal 22 residues, 1 to 22 (MALLAMHSWRWAAAAAAFEKRR), are a transit peptide targeting the mitochondrion. Topologically, residues 23-140 (HSAILIRPLV…KDRPDLRARV (118 aa)) are mitochondrial matrix. The region spanning 140–436 (VAISLGFLGG…LGTVYRETRQ (297 aa)) is the ABC transmembrane type-1 domain. A helical membrane pass occupies residues 141–161 (AISLGFLGGAKAMNIVVPFMF). At 162–185 (KYAVDSLNQMSGNMLNLSDAPNTV) the chain is on the mitochondrial intermembrane side. A helical membrane pass occupies residues 186–206 (ATMATAVLIGYGVSRAGAAFF). Topologically, residues 207–259 (NEVRNAVFGKVAQNSIRRIAKNVFLHLHNLDLGFHLSRQTGALSKAIDRGTRG) are mitochondrial matrix. N6-acetyllysine occurs at positions 216 and 251. The chain crosses the membrane as a helical span at residues 260 to 280 (ISFVLSALVFNLLPIMFEVML). At 281 to 290 (VSGVLYYKCG) the chain is on the mitochondrial intermembrane side. Residues 291 to 311 (AQFALVTLGTLGTYTAFTVAV) form a helical membrane-spanning segment. Residues 312–382 (TRWRTRFRIE…TLAMLNFGQS (71 aa)) are Mitochondrial matrix-facing. Glutathione is bound at residue 315–319 (RTRFR). Serine 336 bears the Phosphoserine mark. A Phosphotyrosine modification is found at tyrosine 340. Threonine 342 is modified (phosphothreonine). 378–381 (NFGQ) contacts glutathione. A helical transmembrane segment spans residues 383 to 403 (AIFSVGLTAIMVLASQGIVAG). At 404–409 (TLTVGD) the chain is on the mitochondrial intermembrane side. A helical membrane pass occupies residues 410–430 (LVMVNGLLFQLSLPLNFLGTV). Glycine 428 contributes to the glutathione binding site. Residues 431 to 752 (YRETRQALID…SVKGCGNCSC (322 aa)) lie on the Mitochondrial matrix side of the membrane. Positions 472 to 706 (VAFDNVHFEY…PHSIYSEMWH (235 aa)) constitute an ABC transporter domain. ATP-binding positions include tyrosine 481 and 505 to 516 (GGSGSGKSTIVR).

This sequence belongs to the ABC transporter superfamily. ABCB family. Heavy Metal importer (TC 3.A.1.210) subfamily. Homodimer or heterodimer. Interacts with C10orf88/PAAT. Forms a complex with ABCB10 and FECH, where a dimeric FECH bridges ABCB7 and ABCB10 homodimers; this complex may be required for cellular iron homeostasis, mitochondrial function and heme biosynthesis. Interacts with FECH. Interacts with ATP5F1A. Interacts with COX4I1; this interaction allows the regulation of cellular iron homeostasis and cellular reactive oxygen species (ROS) levels in cardiomyocytes.

It is found in the mitochondrion inner membrane. It catalyses the reaction (glutathione)4[2Fe(III)-2S] cluster(in) + ATP + H2O = (glutathione)4[2Fe(III)-2S] cluster(out) + ADP + phosphate + H(+). ATPase activity is stimulated by glutathione. In terms of biological role, exports glutathione-coordinated iron-sulfur clusters such as [2Fe-2S]-(GS)4 cluster from the mitochondria to the cytosol in an ATP-dependent manner allowing the assembly of the cytosolic iron-sulfur (Fe/S) cluster-containing proteins and participates in iron homeostasis. Moreover, through a functional complex formed of ABCB7, FECH and ABCB10, also plays a role in the cellular iron homeostasis, mitochondrial function and heme biosynthesis. In cardiomyocytes, regulates cellular iron homeostasis and cellular reactive oxygen species (ROS) levels through its interaction with COX4I1. May also play a role in hematopoiesis. The chain is Iron-sulfur clusters transporter ABCB7, mitochondrial from Homo sapiens (Human).